We begin with the raw amino-acid sequence, 219 residues long: Small ribosomal subunit protein uS3 (219 aa).

A KH type-2 domain is found at 38–106; it reads IREYIENRLK…RVHINIFEVK (69 aa).

This sequence belongs to the universal ribosomal protein uS3 family. Part of the 30S ribosomal subunit. Forms a tight complex with proteins S10 and S14.

Its function is as follows. Binds the lower part of the 30S subunit head. Binds mRNA in the 70S ribosome, positioning it for translation. This chain is Small ribosomal subunit protein uS3, found in Halalkalibacterium halodurans (strain ATCC BAA-125 / DSM 18197 / FERM 7344 / JCM 9153 / C-125) (Bacillus halodurans).